The primary structure comprises 181 residues: Protein GrpE (181 aa).

Residues 1–13 are compositionally biased toward polar residues; sequence MENTQENPATQSA. Residues 1–39 form a disordered region; it reads MENTQENPATQSAEDIGSEKQAAQGAAPAAEAADAALAE. A compositionally biased stretch (low complexity) spans 21–39; sequence QAAQGAAPAAEAADAALAE.

The protein belongs to the GrpE family. In terms of assembly, homodimer.

The protein resides in the cytoplasm. Functionally, participates actively in the response to hyperosmotic and heat shock by preventing the aggregation of stress-denatured proteins, in association with DnaK and GrpE. It is the nucleotide exchange factor for DnaK and may function as a thermosensor. Unfolded proteins bind initially to DnaJ; upon interaction with the DnaJ-bound protein, DnaK hydrolyzes its bound ATP, resulting in the formation of a stable complex. GrpE releases ADP from DnaK; ATP binding to DnaK triggers the release of the substrate protein, thus completing the reaction cycle. Several rounds of ATP-dependent interactions between DnaJ, DnaK and GrpE are required for fully efficient folding. The polypeptide is Protein GrpE (Burkholderia lata (strain ATCC 17760 / DSM 23089 / LMG 22485 / NCIMB 9086 / R18194 / 383)).